The primary structure comprises 527 residues: Rhamnogalacturonate lyase A (527 aa).

Positions 1-19 (MLKASLLSFVAFTAQVAHA) are cleaved as a signal peptide. 2 disulfide bridges follow: C49/C92 and C183/C192. N350 carries N-linked (GlcNAc...) asparagine glycosylation.

The protein belongs to the polysaccharide lyase 4 family.

It is found in the secreted. The catalysed reaction is Endotype eliminative cleavage of L-alpha-rhamnopyranosyl-(1-&gt;4)-alpha-D-galactopyranosyluronic acid bonds of rhamnogalacturonan I domains in ramified hairy regions of pectin leaving L-rhamnopyranose at the reducing end and 4-deoxy-4,5-unsaturated D-galactopyranosyluronic acid at the non-reducing end.. Functionally, pectinolytic enzyme that has a positive effect in the apple hot-mash liquefaction process. This endolyase hydrolyzes the alpha-L-rhamnopyranosyl-(1,4)-alpha-D-galacturonopyranosyl glycosidic linkage by beta-elimination, thereby generating oligosaccharides terminating at the non-reducing end with a hex-4-enopyranosyluronic acid residue. The protein is Rhamnogalacturonate lyase A (rglA) of Aspergillus aculeatus.